The sequence spans 204 residues: Small ribosomal subunit protein uS4 (204 aa).

Positions 93 to 156 (SRLSSVLYHS…AKIPVIVEAV (64 aa)) constitute an S4 RNA-binding domain.

It belongs to the universal ribosomal protein uS4 family. As to quaternary structure, part of the 30S ribosomal subunit. Contacts protein S5. The interaction surface between S4 and S5 is involved in control of translational fidelity.

Its function is as follows. One of the primary rRNA binding proteins, it binds directly to 16S rRNA where it nucleates assembly of the body of the 30S subunit. With S5 and S12 plays an important role in translational accuracy. The polypeptide is Small ribosomal subunit protein uS4 (Wolbachia sp. subsp. Brugia malayi (strain TRS)).